The primary structure comprises 335 residues: HTH-type transcriptional regulator RipA (335 aa).

In terms of domain architecture, HTH araC/xylS-type spans 119 to 216 (RKVAQKLIAY…GDTPSSFTSP (98 aa)). 2 DNA-binding regions (H-T-H motif) span residues 136-157 (LEFAQLHNISSRTLQRQFVAST) and 183-206 (IGQVSQMVGFSATSSLTRAFKRHT).

Under iron limitation, represses the acn (aconitase), catA (catechol 1,2 dioxygenase), leuCD (isopropylmalate dehydratase), narKGHJI (nitrite/nitrate transporter and nitrate reductase), sdhCAB (succinate dehydrogenase), pta (phosphotransacetylase) and katA (catalase) genes. This chain is HTH-type transcriptional regulator RipA, found in Corynebacterium diphtheriae (strain ATCC 700971 / NCTC 13129 / Biotype gravis).